Reading from the N-terminus, the 894-residue chain is Pentatricopeptide repeat-containing protein At1g19720 (894 aa).

PPR repeat units follow at residues 80-110, 114-144, 145-179, 180-214, 215-245, 246-280, 281-315, 316-350, 351-385, 386-416, 417-451, 452-486, 488-522, 523-557, 558-588, 589-623, 624-659, and 660-694; these read KRSTYLKLLESCIDSGSIHLGRILHARFGLF, DVFVETKLLSMYAKCGCIADARKVFDSMRER, NLFTWSAMIGAYSRENRWREVAKLFRLMMKDGVLP, DDFLFPKILQGCANCGDVEAGKVIHSVVIKLGMSS, CLRVSNSILAVYAKCGELDFATKFFRRMRER, DVIAWNSVLLAYCQNGKHEEAVELVKEMEKEGISP, GLVTWNILIGGYNQLGKCDAAMDLMQKMETFGITA, DVFTWTAMISGLIHNGMRYQALDMFRKMFLAGVVP, NAVTIMSAVSACSCLKVINQGSEVHSIAVKMGFID, DVLVGNSLVDMYSKCGKLEDARKVFDSVKNK, DVYTWNSMITGYCQAGYCGKAYELFTRMQDANLRP, NIITWNTMISGYIKNGDEGEAMDLFQRMEKDGKVQ, NTATWNLIIAGYIQNGKKDEALELFRKMQFSRFMP, NSVTILSLLPACANLLGAKMVREIHGCVLRRNLDA, IHAVKNALTDTYAKSGDIEYSRTIFLGMETK, DIITWNSLIGGYVLHGSYGPALALFNQMKTQGITP, NRGTLSSIILAHGLMGNVDEGKKVFYSIANDYHIIP, and ALEHCSAMVYLYGRANRLEEALQFIQEMNIQSETP. A type E motif region spans residues 695 to 770; the sequence is IWESFLTGCR…PLGQSWIEVR (76 aa). Residues 771 to 801 are type E(+) motif; that stretch reads NLIHTFTTGDQSKLCTDVLYPLVEKMSRLDN. Positions 803 to 894 are type DYW motif; sequence SDQYNGELWI…NGDCSCKDYW (92 aa).

This sequence belongs to the PPR family. PCMP-H subfamily.

This chain is Pentatricopeptide repeat-containing protein At1g19720 (DYW7), found in Arabidopsis thaliana (Mouse-ear cress).